Consider the following 142-residue polypeptide: Hemoglobin subunit theta-1 (142 aa).

The region spanning 2–142 (ALSAEDRALV…VISALVSEYR (141 aa)) is the Globin domain. His-59 and His-88 together coordinate heme b.

Belongs to the globin family.

The protein is Hemoglobin subunit theta-1 (HBQ1) of Homo sapiens (Human).